The primary structure comprises 277 residues: Purine nucleoside phosphorylase 2 (277 aa).

Residues H65, 85 to 87, and A117 contribute to the phosphate site; that span reads RGH. Position 197 (E197) interacts with a purine D-ribonucleoside. S216 lines the phosphate pocket. N239 is an a purine D-ribonucleoside binding site.

It belongs to the PNP/MTAP phosphorylase family. In terms of assembly, hexamer. Dimer of trimers.

It carries out the reaction a purine D-ribonucleoside + phosphate = a purine nucleobase + alpha-D-ribose 1-phosphate. It functions in the pathway purine metabolism; xanthosine degradation. Its pathway is purine metabolism; purine nucleoside salvage. With respect to regulation, rapidly inactivated by p-chloromercuriphenylsulfonic acid (p-CMB). Dithiothreitol incubation restores the activity. Its function is as follows. The purine nucleoside phosphorylases catalyze the phosphorolytic breakdown of the N-glycosidic bond in the beta-(deoxy)ribonucleoside molecules, with the formation of the corresponding free purine bases and pentose-1-phosphate. This protein can degrade all purine nucleosides including xanthosine, inosine and guanosine, but cannot cleave adenosine, deoxyadenosine or hypoxanthine arabinoside. Has a preference for the neutral over the monoanionic form of xanthosine. The polypeptide is Purine nucleoside phosphorylase 2 (xapA) (Escherichia coli (strain K12)).